A 234-amino-acid chain; its full sequence is Phosphoglycolate phosphatase (234 aa).

The Nucleophile role is filled by Asp-15. The Mg(2+) site is built by Asp-15, Asp-17, and Asp-177.

Belongs to the HAD-like hydrolase superfamily. CbbY/CbbZ/Gph/YieH family. Monomer. It depends on Mg(2+) as a cofactor. Requires chloride as cofactor.

It catalyses the reaction 2-phosphoglycolate + H2O = glycolate + phosphate. It functions in the pathway organic acid metabolism; glycolate biosynthesis; glycolate from 2-phosphoglycolate: step 1/1. Functionally, specifically catalyzes the dephosphorylation of 2-phosphoglycolate. Is involved in the dissimilation of the intracellular 2-phosphoglycolate formed during the DNA repair of 3'-phosphoglycolate ends, a major class of DNA lesions induced by oxidative stress. The chain is Phosphoglycolate phosphatase from Photorhabdus laumondii subsp. laumondii (strain DSM 15139 / CIP 105565 / TT01) (Photorhabdus luminescens subsp. laumondii).